The primary structure comprises 57 residues: Zinc finger protein MJ0458.1 (57 aa).

4 consecutive short sequence motifs (c(P)XCG motif) follow at residues 8 to 12 (CISCN), 26 to 30 (CPNCG), 37 to 41 (CERCR), and 49 to 53 (CPKCG). Zn(2+)-binding residues include Cys-26 and Cys-29. Zn(2+) is bound by residues Cys-49 and Cys-52.

As to quaternary structure, monomer in solution.

Functionally, zinc-binding protein that binds only one zinc ion. The chain is Zinc finger protein MJ0458.1 from Methanocaldococcus jannaschii (strain ATCC 43067 / DSM 2661 / JAL-1 / JCM 10045 / NBRC 100440) (Methanococcus jannaschii).